The following is a 185-amino-acid chain: Alpha-S1-casein (185 aa).

An N-terminal signal peptide occupies residues 1–15 (MRLLILTCLVAVALA). Ser31, Ser33, Ser41, Ser71, Ser85, Ser86, Ser88, Ser89, Ser90, and Ser91 each carry phosphoserine.

This sequence belongs to the alpha-casein family. As to quaternary structure, heteromultimers of alpha-s1 casein and kappa-casein; disulfide-linked. In terms of processing, not glycosylated. In terms of tissue distribution, mammary gland specific. Secreted in milk.

It localises to the secreted. Its function is as follows. Important role in the capacity of milk to transport calcium phosphate. Casoxin D acts as opioid antagonist and has vasorelaxing activity mediated by bradykinin B1 receptors. This chain is Alpha-S1-casein (CSN1S1), found in Homo sapiens (Human).